A 166-amino-acid chain; its full sequence is Signal peptidase complex catalytic subunit SEC11 (166 aa).

Over methionine 1–glutamine 9 the chain is Cytoplasmic. The chain crosses the membrane as a helical; Signal-anchor for type II membrane protein span at residues phenylalanine 10 to isoleucine 30. The Lumenal portion of the chain corresponds to alanine 31–glutamate 166. Residues serine 44, histidine 83, and aspartate 108 each act as charge relay system in the active site. Positions glycine 152–phenylalanine 163 are C-terminal short (CTS) helix.

The protein belongs to the peptidase S26B family. In terms of assembly, component of the signal peptidase complex (SPC) composed of a catalytic subunit SEC11 and three accessory subunits SPC1, SPC2 and SPC3. The complex induces a local thinning of the ER membrane which is used to measure the length of the signal peptide (SP) h-region of protein substrates. This ensures the selectivity of the complex towards h-regions shorter than 18-20 amino acids. SPC associates with the translocon complex.

It localises to the endoplasmic reticulum membrane. It catalyses the reaction Cleavage of hydrophobic, N-terminal signal or leader sequences from secreted and periplasmic proteins.. In terms of biological role, catalytic component of the signal peptidase complex (SPC) which catalyzes the cleavage of N-terminal signal sequences from nascent proteins as they are translocated into the lumen of the endoplasmic reticulum. Specifically cleaves N-terminal signal peptides that contain a hydrophobic alpha-helix (h-region) shorter than 18-20 amino acids. This chain is Signal peptidase complex catalytic subunit SEC11 (SEC11), found in Candida albicans (strain SC5314 / ATCC MYA-2876) (Yeast).